A 433-amino-acid polypeptide reads, in one-letter code: Keratin, type I cytoskeletal 17 (433 aa).

The segment at 1–24 (MTTTIRQFTSSSSIKGSSGLGGGS) is disordered. The interval 1 to 83 (MTTTIRQFTS…GGVDGLLAGG (83 aa)) is head. 2 positions are modified to phosphoserine: serine 12 and serine 13. A Glycyl lysine isopeptide (Lys-Gly) (interchain with G-Cter in SUMO1); alternate cross-link involves residue lysine 15. Lysine 15 is covalently cross-linked (Glycyl lysine isopeptide (Lys-Gly) (interchain with G-Cter in SUMO2); alternate). A phosphoserine mark is found at serine 25, serine 32, serine 34, and serine 39. Serine 44 carries the phosphoserine; by RPS6KA1 modification. Residues 84 to 120 (EKATMQNLNDRLASYLDKVRALEEANTELEVKIRDWY) are coil 1A. The IF rod domain maps to 84 to 395 (EKATMQNLND…RLLEGEDAHL (312 aa)). At threonine 110 the chain carries Phosphothreonine. Residues 121-138 (QKQAPGPARDYSAYYHTI) are linker 1. The segment at 139–230 (EDLKNKILVA…NHEEEMNALR (92 aa)) is coil 1B. Residues 231–250 (GQVGGEINVEMDAAPGVDLS) are linker 12. The segment at 251-392 (RILSEMRDQY…TYRRLLEGED (142 aa)) is coil 2. A Glycyl lysine isopeptide (Lys-Gly) (interchain with G-Cter in SUMO2) cross-link involves residue lysine 278. Phosphothreonine is present on threonine 279. Serine 323 is subject to Phosphoserine. The segment at 393 to 433 (AHLTQYKPKEPVTTRQVRTIVEEVQDGKVISSREQVHQTTR) is tail. Glycyl lysine isopeptide (Lys-Gly) (interchain with G-Cter in SUMO1); alternate cross-links involve residues lysine 399, lysine 401, and lysine 420. Glycyl lysine isopeptide (Lys-Gly) (interchain with G-Cter in SUMO2); alternate cross-links involve residues lysine 399, lysine 401, and lysine 420.

Belongs to the intermediate filament family. In terms of assembly, heterodimer of a type I and a type II keratin. KRT17 associates with KRT6 isomers (KRT6A or KRT6B). Interacts with TRADD and SFN. Post-translationally, phosphorylation at Ser-44 occurs in a growth- and stress-dependent fashion in skin keratinocytes, it has no effect on filament organization. In terms of tissue distribution, expressed strongly in outer root sheath and medulla region of hair follicle and in the early differentiating epithelial cells (trichocytes) within the hair bulb region. Weak expression in the matrix cells of hair bulb. Also present in the sweat gland within the skin, vibrissae follicle, salivary gland, tooth and thymus.

Its subcellular location is the cytoplasm. Functionally, type I keratin involved in the formation and maintenance of various skin appendages, specifically in determining shape and orientation of hair. Required for the correct growth of hair follicles, in particular for the persistence of the anagen (growth) state. Modulates the function of TNF-alpha in the specific context of hair cycling. Regulates protein synthesis and epithelial cell growth through binding to the adapter protein SFN and by stimulating Akt/mTOR pathway. Involved in tissue repair. May be a marker of basal cell differentiation in complex epithelia and therefore indicative of a certain type of epithelial 'stem cells'. Acts as a promoter of epithelial proliferation by acting a regulator of immune response in skin: promotes Th1/Th17-dominated immune environment contributing to the development of basaloid skin tumors. May act as an autoantigen in the immunopathogenesis of psoriasis, with certain peptide regions being a major target for autoreactive T-cells and hence causing their proliferation. The polypeptide is Keratin, type I cytoskeletal 17 (Krt17) (Mus musculus (Mouse)).